The following is a 1578-amino-acid chain: E3 ubiquitin-protein ligase HECW2 (1578 aa).

Position 48 is a phosphoserine (Ser48). Residues 171 to 298 (MEGGASGSLH…LERQAGDQML (128 aa)) enclose the C2 domain. 2 disordered regions span residues 341–453 (HTVN…FPTD) and 496–802 (IDDG…PSVR). The span at 386 to 406 (RTSSTLEIDTEDLISTSSRNS) shows a compositional bias: polar residues. Positions 518–532 (ASIHETASLEERLEN) are enriched in basic and acidic residues. The segment covering 559–576 (SADQGSTELCSSQEVDQP) has biased composition (polar residues). Residues 577-593 (TSGADAGASDTSGGSRR) show a composition bias toward low complexity. Polar residues-rich tracts occupy residues 597–614 (ETESLDQGSEPSQVSSET), 643–664 (SSCNESVTTQLSSVETRCSSLE), and 688–708 (PTSSGPAEGSQESVCTPSSLP). Composition is skewed to low complexity over residues 721-735 (AAEAAALSEQGELGE), 746-755 (AAAAAPAAAA), and 769-782 (AQGACEGATAQEEG). Residues 737–1074 (WQRRGSLEGA…PRPSSTFNTV (338 aa)) are interaction with TP73. The 34-residue stretch at 813 to 846 (EALPPNWEARIDSHGRIFYVDHVNRTTTWQRPTA) folds into the WW 1 domain. Residues 853-880 (LQRSNSIQQMEQLNRRYQSIRRTMTNER) adopt a coiled-coil conformation. Phosphoserine occurs at positions 858 and 915. In terms of domain architecture, WW 2 spans 991-1024 (LELPRGWEMKHDHQGKAFFVDHNSRTTTFIDPRL). 2 disordered regions span residues 1030–1075 (RPTS…NTVS) and 1167–1193 (CQSPRGSPVSSPQNSPGTQRANARAPA). The segment covering 1037 to 1046 (HRQHLTRQRS) has biased composition (basic residues). Residues 1167 to 1187 (CQSPRGSPVSSPQNSPGTQRA) are compositionally biased toward polar residues. Phosphoserine is present on Ser1181. The HECT domain occupies 1243 to 1578 (SRKDLQRNKL…VEETSTFGLE (336 aa)). Cys1546 serves as the catalytic Glycyl thioester intermediate.

As to quaternary structure, interacts with TP73. Interacts with FZR1.

The protein localises to the cytoplasm. Its subcellular location is the cytoskeleton. It localises to the spindle. It catalyses the reaction S-ubiquitinyl-[E2 ubiquitin-conjugating enzyme]-L-cysteine + [acceptor protein]-L-lysine = [E2 ubiquitin-conjugating enzyme]-L-cysteine + N(6)-ubiquitinyl-[acceptor protein]-L-lysine.. It participates in protein modification; protein ubiquitination. E3 ubiquitin-protein ligase that mediates ubiquitination of TP73. Acts to stabilize TP73 and enhance activation of transcription by TP73. Involved in the regulation of mitotic metaphase/anaphase transition. The chain is E3 ubiquitin-protein ligase HECW2 (Hecw2) from Mus musculus (Mouse).